The following is a 234-amino-acid chain: Ribose-5-phosphate isomerase A (234 aa).

Residues 28–31 (TGST), 83–86 (DGAD), and 96–99 (KGGG) contribute to the substrate site. E105 serves as the catalytic Proton acceptor. Residue K123 participates in substrate binding.

Belongs to the ribose 5-phosphate isomerase family. As to quaternary structure, homodimer.

The catalysed reaction is aldehydo-D-ribose 5-phosphate = D-ribulose 5-phosphate. It participates in carbohydrate degradation; pentose phosphate pathway; D-ribose 5-phosphate from D-ribulose 5-phosphate (non-oxidative stage): step 1/1. Functionally, catalyzes the reversible conversion of ribose-5-phosphate to ribulose 5-phosphate. This Bartonella quintana (strain Toulouse) (Rochalimaea quintana) protein is Ribose-5-phosphate isomerase A.